The chain runs to 2185 residues: Genome polyprotein (2185 aa).

Gly-2 carries N-myristoyl glycine; by host lipidation. The Cytoplasmic portion of the chain corresponds to 2 to 1495 (GAQVSTQKTG…HVSRAFICLQ (1494 aa)). The segment at 568–584 (FFQGPVEDAITAAIGRV) is amphipathic alpha-helix. Residues His-872 and Asp-890 each act as for protease 2A activity in the active site. 2 residues coordinate Zn(2+): Cys-907 and Cys-909. Cys-961 serves as the catalytic For protease 2A activity. Zn(2+)-binding residues include Cys-967 and His-969. Residues 1101–1173 (NNGWLKKFTE…EQSAPSQSDQ (73 aa)) are membrane-binding. The interval 1101 to 1239 (NNGWLKKFTE…SPGAGKSVAT (139 aa)) is oligomerization. An RNA-binding region spans residues 1122-1126 (AIKIQ). In terms of domain architecture, SF3 helicase spans 1205–1361 (EKKMSNYIQF…SMYSQNGKIN (157 aa)). Residues Cys-1369, Cys-1381, and Cys-1386 each coordinate Zn(2+). The segment at 1369–1386 (CDEECCPVNFKKCCPLVC) adopts a C4-type; degenerate zinc-finger fold. An RNA-binding region spans residues 1413 to 1420 (EYNHRHSV). The interval 1424 to 1429 (LEALFQ) is oligomerization. Residues 1496 to 1511 (AITTFVSVAGIIYIIY) lie within the membrane without spanning it. The Cytoplasmic portion of the chain corresponds to 1512-2185 (KLFAGFQGAY…TIRRKWLDSF (674 aa)). Tyr-1521 bears the O-(5'-phospho-RNA)-tyrosine mark. In terms of domain architecture, Peptidase C3 spans 1541–1719 (GPAFEFAVAM…FSAALLKHYF (179 aa)). Residues His-1580, Glu-1611, and Cys-1687 each act as for protease 3C activity in the active site. The RdRp catalytic domain maps to 1950-2066 (GHLIAFDYSG…SYPWPIDASL (117 aa)). The Mg(2+) site is built by Asp-1956 and Asp-2052.

It belongs to the picornaviruses polyprotein family. As to quaternary structure, interacts with capsid protein VP1 and capsid protein VP3 to form heterotrimeric protomers. In terms of assembly, interacts with capsid protein VP0, and capsid protein VP3 to form heterotrimeric protomers. Five protomers subsequently associate to form pentamers which serve as building blocks for the capsid. Interacts with capsid protein VP2, capsid protein VP3 and capsid protein VP4 following cleavage of capsid protein VP0. Interacts with host CD55. Interacts with host CXADR. Interacts with capsid protein VP1 and capsid protein VP3 in the mature capsid. As to quaternary structure, interacts with capsid protein VP0 and capsid protein VP1 to form heterotrimeric protomers. Five protomers subsequently associate to form pentamers which serve as building blocks for the capsid. Interacts with capsid protein VP4 in the mature capsid. Interacts with protein 2C; this interaction may be important for virion morphogenesis. In terms of assembly, interacts with capsid protein VP1 and capsid protein VP3. Homodimer. As to quaternary structure, homohexamer; forms a hexameric ring structure with 6-fold symmetry characteristic of AAA+ ATPases. Interacts (via N-terminus) with host RTN3 (via reticulon domain); this interaction is important for viral replication. Interacts with capsid protein VP3; this interaction may be important for virion morphogenesis. In terms of assembly, interacts with protein 3CD. Homodimer. Interacts with host GBF1. Interacts (via GOLD domain) with host ACBD3 (via GOLD domain); this interaction allows the formation of a viral protein 3A/ACBD3 heterotetramer with a 2:2 stoichiometry, which will stimulate the recruitment of host PI4KB in order to synthesize PI4P at the viral RNA replication sites. As to quaternary structure, interacts with RNA-directed RNA polymerase. In terms of assembly, interacts with host TICAM1 (via C-terminus). Interacts with protein 3AB and with RNA-directed RNA polymerase. As to quaternary structure, interacts with Viral protein genome-linked and with protein 3CD. The cofactor is Mg(2+). Specific enzymatic cleavages in vivo by the viral proteases yield processing intermediates and the mature proteins. Post-translationally, myristoylation is required for the formation of pentamers during virus assembly. Further assembly of 12 pentamers and a molecule of genomic RNA generates the provirion. In terms of processing, during virion maturation, immature virions are rendered infectious following cleavage of VP0 into VP4 and VP2. This maturation seems to be an autocatalytic event triggered by the presence of RNA in the capsid and it is followed by a conformational change infectious virion. Myristoylation is required during RNA encapsidation and formation of the mature virus particle. Post-translationally, VPg is uridylylated by the polymerase into VPg-pUpU. This acts as a nucleotide-peptide primer for the genomic RNA replication.

It is found in the virion. Its subcellular location is the host cytoplasm. The protein resides in the host cytoplasmic vesicle membrane. It localises to the host nucleus. It catalyses the reaction a ribonucleoside 5'-triphosphate + H2O = a ribonucleoside 5'-diphosphate + phosphate + H(+). The catalysed reaction is Selective cleavage of Tyr-|-Gly bond in the picornavirus polyprotein.. It carries out the reaction RNA(n) + a ribonucleoside 5'-triphosphate = RNA(n+1) + diphosphate. The enzyme catalyses Selective cleavage of Gln-|-Gly bond in the poliovirus polyprotein. In other picornavirus reactions Glu may be substituted for Gln, and Ser or Thr for Gly.. Replication or transcription is subject to high level of random mutations by the nucleotide analog ribavirin. Functionally, forms an icosahedral capsid of pseudo T=3 symmetry with capsid proteins VP2 and VP3. The capsid is 300 Angstroms in diameter, composed of 60 copies of each capsid protein and enclosing the viral positive strand RNA genome. Capsid protein VP1 mainly forms the vertices of the capsid. Capsid protein VP1 interacts with host cell receptors CD55 and CXADR to provide virion attachment to target host cells. This attachment induces virion internalization. Tyrosine kinases are probably involved in the entry process. After binding to its receptor, the capsid undergoes conformational changes. Capsid protein VP1 N-terminus (that contains an amphipathic alpha-helix) and capsid protein VP4 are externalized. Together, they shape a pore in the host membrane through which viral genome is translocated to host cell cytoplasm. Forms an icosahedral capsid of pseudo T=3 symmetry with capsid proteins VP2 and VP3. The capsid is 300 Angstroms in diameter, composed of 60 copies of each capsid protein and enclosing the viral positive strand RNA genome. In terms of biological role, lies on the inner surface of the capsid shell. After binding to the host receptor, the capsid undergoes conformational changes. Capsid protein VP4 is released, Capsid protein VP1 N-terminus is externalized, and together, they shape a pore in the host membrane through which the viral genome is translocated into the host cell cytoplasm. Its function is as follows. Component of immature procapsids, which is cleaved into capsid proteins VP4 and VP2 after maturation. Allows the capsid to remain inactive before the maturation step. Functionally, cysteine protease that cleaves viral polyprotein and specific host proteins. It is responsible for the autocatalytic cleavage between the P1 and P2 regions, which is the first cleavage occurring in the polyprotein. Also cleaves the host translation initiation factor EIF4G1, in order to shut down the capped cellular mRNA translation. Inhibits the host nucleus-cytoplasm protein and RNA trafficking by cleaving host members of the nuclear pores. Counteracts stress granule formation probably by antagonizing its assembly or promoting its dissassembly. Cleaves and inhibits host IFIH1/MDA5, thereby inhibiting the type-I IFN production and the establishment of the antiviral state. Cleaves and inhibits host MAVS, thereby inhibiting the type-I IFN production and the establishment of the antiviral state. Plays an essential role in the virus replication cycle by acting as a viroporin. Creates a pore in the host endoplasmic reticulum and as a consequence releases Ca2+ in the cytoplasm of infected cell. In turn, high levels of cytoplasmic calcium may trigger membrane trafficking and transport of viral ER-associated proteins to viroplasms, sites of viral genome replication. In terms of biological role, induces and associates with structural rearrangements of intracellular membranes. Displays RNA-binding, nucleotide binding and NTPase activities. May play a role in virion morphogenesis and viral RNA encapsidation by interacting with the capsid protein VP3. Its function is as follows. Localizes the viral replication complex to the surface of membranous vesicles. Together with protein 3CD binds the Cis-Active RNA Element (CRE) which is involved in RNA synthesis initiation. Acts as a cofactor to stimulate the activity of 3D polymerase, maybe through a nucleid acid chaperone activity. Functionally, localizes the viral replication complex to the surface of membranous vesicles. It inhibits host cell endoplasmic reticulum-to-Golgi apparatus transport and causes the disassembly of the Golgi complex, possibly through GBF1 interaction. This would result in depletion of MHC, trail receptors and IFN receptors at the host cell surface. Plays an essential role in viral RNA replication by recruiting ACBD3 and PI4KB at the viral replication sites, thereby allowing the formation of the rearranged membranous structures where viral replication takes place. Acts as a primer for viral RNA replication and remains covalently bound to viral genomic RNA. VPg is uridylylated prior to priming replication into VPg-pUpU. The oriI viral genomic sequence may act as a template for this. The VPg-pUpU is then used as primer on the genomic RNA poly(A) by the RNA-dependent RNA polymerase to replicate the viral genome. During genome replication, the VPg-RNA linkage is removed by the host TDP2, thereby accelerating replication. During the late stage of the replication cycle, host TDP2 is excluded from sites of viral RNA synthesis and encapsidation, allowing for the generation of progeny virions. In terms of biological role, involved in the viral replication complex and viral polypeptide maturation. It exhibits protease activity with a specificity and catalytic efficiency that is different from protease 3C. Protein 3CD lacks polymerase activity. Protein 3CD binds to the 5'UTR of the viral genome. Its function is as follows. Major viral protease that mediates proteolytic processing of the polyprotein. Cleaves host EIF5B, contributing to host translation shutoff. Also cleaves host PABPC1, contributing to host translation shutoff. Cleaves and inhibits host RIGI, thereby inhibiting the type-I IFN production and the establishment of the antiviral state. Cleaves and inhibits host MAVS, thereby inhibiting the type-I IFN production and the establishment of the antiviral state. Cleaves and inhibits host TICAM1/TRIF, thereby inhibiting the type-I IFN production. Cleaves host NLRP1, triggers host N-glycine-mediated degradation of the autoinhibitory NLRP1 N-terminal fragment. Functionally, replicates the viral genomic RNA on the surface of intracellular membranes. May form linear arrays of subunits that propagate along a strong head-to-tail interaction called interface-I. Covalently attaches UMP to a tyrosine of VPg, which is used to prime RNA synthesis. The positive stranded RNA genome is first replicated at virus induced membranous vesicles, creating a dsRNA genomic replication form. This dsRNA is then used as template to synthesize positive stranded RNA genomes. ss(+)RNA genomes are either translated, replicated or encapsidated. This Homo sapiens (Human) protein is Genome polyprotein.